Here is a 196-residue protein sequence, read N- to C-terminus: GTP cyclohydrolase-2 (196 aa).

49 to 53 (RVHSE) is a GTP binding site. Cys54, Cys65, and Cys67 together coordinate Zn(2+). GTP is bound by residues Gln70, 92 to 94 (EGR), and Thr114. The active-site Proton acceptor is the Asp126. Arg128 (nucleophile) is an active-site residue. Residues Thr149 and Lys154 each contribute to the GTP site.

It belongs to the GTP cyclohydrolase II family. Homodimer. It depends on Zn(2+) as a cofactor.

The catalysed reaction is GTP + 4 H2O = 2,5-diamino-6-hydroxy-4-(5-phosphoribosylamino)-pyrimidine + formate + 2 phosphate + 3 H(+). It participates in cofactor biosynthesis; riboflavin biosynthesis; 5-amino-6-(D-ribitylamino)uracil from GTP: step 1/4. Catalyzes the conversion of GTP to 2,5-diamino-6-ribosylamino-4(3H)-pyrimidinone 5'-phosphate (DARP), formate and pyrophosphate. The polypeptide is GTP cyclohydrolase-2 (Enterobacter sp. (strain 638)).